The chain runs to 591 residues: DEAD-box ATP-dependent RNA helicase 35 (591 aa).

The Q motif motif lies at 146 to 174 (KNFKDMKFPRPVLDTLKEKGIVQPTPIQV). Positions 177 to 361 (LPVILAGRDM…RSALVKPVTV (185 aa)) constitute a Helicase ATP-binding domain. Residue 190–197 (AFTGSGKT) coordinates ATP. The DEAD box motif lies at 309 to 312 (DEAD). The Helicase C-terminal domain maps to 372-532 (DVIQEVEYVK…RIPPVLAELN (161 aa)). The CCHC-type zinc finger occupies 548-565 (KGCAYCGGLGHRIRDCPK).

It belongs to the DEAD box helicase family. DDX41 subfamily.

It catalyses the reaction ATP + H2O = ADP + phosphate + H(+). This chain is DEAD-box ATP-dependent RNA helicase 35 (RH35), found in Arabidopsis thaliana (Mouse-ear cress).